Reading from the N-terminus, the 63-residue chain is Large ribosomal subunit protein bL28 (63 aa).

It belongs to the bacterial ribosomal protein bL28 family.

In Clostridium acetobutylicum (strain ATCC 824 / DSM 792 / JCM 1419 / IAM 19013 / LMG 5710 / NBRC 13948 / NRRL B-527 / VKM B-1787 / 2291 / W), this protein is Large ribosomal subunit protein bL28.